Consider the following 597-residue polypeptide: Arginine--tRNA ligase (597 aa).

The 'HIGH' region signature appears at 137–147 (PNIAKEMHVGH).

The protein belongs to the class-I aminoacyl-tRNA synthetase family. As to quaternary structure, monomer.

It localises to the cytoplasm. The enzyme catalyses tRNA(Arg) + L-arginine + ATP = L-arginyl-tRNA(Arg) + AMP + diphosphate. The sequence is that of Arginine--tRNA ligase from Parasynechococcus marenigrum (strain WH8102).